A 223-amino-acid polypeptide reads, in one-letter code: Lipoprotein signal peptidase (223 aa).

Residues 1 to 20 (MNSAKVNPSGHAPTPAPTAS) form a disordered region. Transmembrane regions (helical) follow at residues 32–52 (LFFGLAIAGGALDLWSKEAIF), 65–85 (WIIEGYFGIETAVNIGAVFGL), 91–111 (LVFAAISVFAAAAIIAWLFFF), and 116–136 (SCWLTFALGCITGGIIGNLYD). Active-site residues include Asp156 and Asp175. A helical membrane pass occupies residues 173–193 (IADSLLVTGAIMLLVQSFFFP). Residues 196 to 223 (PHGEADGNELPGRRAPDEPTEGTKPAAS) are disordered.

The protein belongs to the peptidase A8 family.

The protein resides in the cell inner membrane. It carries out the reaction Release of signal peptides from bacterial membrane prolipoproteins. Hydrolyzes -Xaa-Yaa-Zaa-|-(S,diacylglyceryl)Cys-, in which Xaa is hydrophobic (preferably Leu), and Yaa (Ala or Ser) and Zaa (Gly or Ala) have small, neutral side chains.. It functions in the pathway protein modification; lipoprotein biosynthesis (signal peptide cleavage). This protein specifically catalyzes the removal of signal peptides from prolipoproteins. In Rhodopirellula baltica (strain DSM 10527 / NCIMB 13988 / SH1), this protein is Lipoprotein signal peptidase.